Here is a 119-residue protein sequence, read N- to C-terminus: Integration host factor subunit alpha (119 aa).

The tract at residues 96–119 is disordered; that stretch reads INGQQANGKMNGESAPSEFSAETE.

The protein belongs to the bacterial histone-like protein family. As to quaternary structure, heterodimer of an alpha and a beta chain.

Its function is as follows. This protein is one of the two subunits of integration host factor, a specific DNA-binding protein that functions in genetic recombination as well as in transcriptional and translational control. This is Integration host factor subunit alpha from Bradyrhizobium sp. (strain ORS 278).